The following is a 295-amino-acid chain: Small ribosomal subunit protein bS1 (295 aa).

3 consecutive S1 motif domains span residues 28–97, 115–179, and 193–261; these read GQLV…VSLR, GQTV…LSER, and GQLI…LSTK.

It belongs to the bacterial ribosomal protein bS1 family.

Its function is as follows. Binds mRNA. The chain is Small ribosomal subunit protein bS1 (rpsA) from Synechococcus elongatus (strain ATCC 33912 / PCC 7942 / FACHB-805) (Anacystis nidulans R2).